The primary structure comprises 463 residues: MADYIVKDISLADFGRKEIAIAETEMPGLMATRAEYGPQQILKGARIAGSLHMTIQTAVLIETLTALGAEVRWASCNIFSTQDHAAAAIAAAGVPVFAFKGENLVEYWEYAHKIFEWHDGGYPNLILDDGGDATLLCVLGPKAEKDPSILNNPQNEEEEALYAVMKKYLAEKPGFYSAIRAAIGGVSEETTTGVHRLYQMAQKDELPFPAINVNDSVTKSKFDNLYGCRESLVDAIRRGTDVMLSGKVAVVCGYGDVGKGSAASLRQGGARVIVTEVDPICALQAAMEGYEVQTLNDVADKADIFVTATGNKDVITVDDMRKMKNNAIVCNIGHFDSEIQIAGLRNFKWDEIKPQVHHVEFPDGKKLIVLSEGRLVNLGNATGHPSFVMSASFTNQTLAQIELWTNKAKYENQVYTLPKHLDEKVAFLHLEKLGAKLTTLRKDQADYIGVPEAGPFKPDHYRY.

Positions 54, 129, and 189 each coordinate substrate. T190–T192 contributes to the NAD(+) binding site. Substrate-binding residues include K219 and D223. Residues N224, G253 to G258, E276, N311, I332 to H334, and N377 each bind NAD(+).

The protein belongs to the adenosylhomocysteinase family. The cofactor is NAD(+).

The protein localises to the cytoplasm. It catalyses the reaction S-adenosyl-L-homocysteine + H2O = L-homocysteine + adenosine. Its pathway is amino-acid biosynthesis; L-homocysteine biosynthesis; L-homocysteine from S-adenosyl-L-homocysteine: step 1/1. In terms of biological role, may play a key role in the regulation of the intracellular concentration of adenosylhomocysteine. The sequence is that of Adenosylhomocysteinase from Caulobacter vibrioides (strain ATCC 19089 / CIP 103742 / CB 15) (Caulobacter crescentus).